The sequence spans 322 residues: MPTVGLTGPLCSGKDAVVEYLETKHGFNAIFRLPQLNEDGEYIYRTGDLVLGSVDDLISYLTPRWRERFVINGIHSPRLLSALLKRPFFLLVYIDAPIMLRFNRYKTYSSLANTTLEEFCSIQDAAAFQSDNAGTRHRALANLLINNDSNIKLHLWEKLQKADLLNPNRFRPSWDSYFMEMASLAAKRSNCMKRRVGCVLVRGNRVIATGYNGTPRGATNCNEGGCPRCNSASSCGKELDTCLCLHAEENALLEAGRERVGNNAILYCDTCPCLTCSVKITQLGIKEVVYHTSYNMDSHTASLLQAAGVQLRQYIPPENSIF.

Positions 173–311 (SWDSYFMEMA…SLLQAAGVQL (139 aa)) constitute a CMP/dCMP-type deaminase domain. Histidine 246 contributes to the Zn(2+) binding site. The Proton donor role is filled by glutamate 248. 2 residues coordinate Zn(2+): cysteine 273 and cysteine 276.

The protein belongs to the cytidine and deoxycytidylate deaminase family. It depends on Zn(2+) as a cofactor.

The protein localises to the cytoplasm. It is found in the nucleus. The catalysed reaction is dCMP + H2O + H(+) = dUMP + NH4(+). Supplies the nucleotide substrate for thymidylate synthetase. This is Deoxycytidylate deaminase from Schizosaccharomyces pombe (strain 972 / ATCC 24843) (Fission yeast).